A 57-amino-acid polypeptide reads, in one-letter code: Large ribosomal subunit protein bL32c (57 aa).

It belongs to the bacterial ribosomal protein bL32 family.

The protein resides in the plastid. It localises to the chloroplast. The protein is Large ribosomal subunit protein bL32c of Acorus calamus (Sweet flag).